The chain runs to 28 residues: Kappa-stichotoxin-Shd1a/kappa-stichotoxin-Shd1b (28 aa).

4-hydroxyproline; in form SHTX-1 (Shd1a) is present on P6. 2 disulfides stabilise this stretch: C7/C19 and C10/C25.

This sequence belongs to the sea anemone BBH family. Post-translationally, occurs in 2 forms which differ in the post-translational modification of Pro-6. In form SHTX-1 (Shd1a) Pro-6 is a hydroxyproline while in form SHTX-2 (Shd1b) Pro-6 is unmodified.

Its subcellular location is the secreted. The protein localises to the nematocyst. Its function is as follows. Kappa-stichotoxin-Shd1a: inhibits voltage-gated potassium channels (Kv). Functionally, kappa-stichotoxin-Shd1b: inhibits voltage-gated potassium channels (Kv). This toxin inhibits the binding of 125I-alpha-dendrotoxin to synaptosomal membranes (IC(50)=270 nM). The chain is Kappa-stichotoxin-Shd1a/kappa-stichotoxin-Shd1b from Stichodactyla haddoni (Saddle carpet anemone).